The primary structure comprises 427 residues: FAD-dependent monooxygenase OpS4 (427 aa).

A signal peptide spans 1 to 22 (MGSIREPLHLVVIGGGLAGLSA). Glu-37 contributes to the FAD binding site. Asn-54 carries an N-linked (GlcNAc...) asparagine glycan. The FAD site is built by Arg-112, Asp-306, and Ala-319.

Belongs to the paxM FAD-dependent monooxygenase family. FAD serves as cofactor.

It functions in the pathway secondary metabolite biosynthesis. In terms of biological role, FAD-dependent monooxygenase; part of the gene cluster that mediates the biosynthesis of the bibenzoquinone oosporein, a metabolite required for fungal virulence that acts by evading host immunity to facilitate fungal multiplication in insects. The non-reducing polyketide synthase OpS1 produces orsellinic acid by condensing acetyl-CoA with 3 malonyl-CoA units. Orsellinic acid is then hydroxylated to benzenetriol by the hydroxylase OpS4. The intermediate is oxidized either nonenzymatically to 5,5'-dideoxy-oosporein or enzymatically to benzenetetrol by the oxidoreductase OpS7. The latter is further dimerized to oosporein by the catalase OpS5. OpS6 probably functions en route for protecting cells against oxidative stress by scavenging any leaked free radical form of benzenetetrol by activating the thiol group of glutathione. The sequence is that of FAD-dependent monooxygenase OpS4 from Beauveria bassiana (strain ARSEF 2860) (White muscardine disease fungus).